Consider the following 103-residue polypeptide: ATP synthase F(0) complex subunit g, mitochondrial (103 aa).

A2 carries the post-translational modification N-acetylalanine. 3 positions are modified to N6-acetyllysine: K11, K24, and K54.

This sequence belongs to the ATPase g subunit family. In terms of assembly, component of the ATP synthase complex composed at least of ATP5F1A/subunit alpha, ATP5F1B/subunit beta, ATP5MC1/subunit c (homooctomer), MT-ATP6/subunit a, MT-ATP8/subunit 8, ATP5ME/subunit e, ATP5MF/subunit f, ATP5MG/subunit g, ATP5MK/subunit k, ATP5MJ/subunit j, ATP5F1C/subunit gamma, ATP5F1D/subunit delta, ATP5F1E/subunit epsilon, ATP5PF/subunit F6, ATP5PB/subunit b, ATP5PD/subunit d, ATP5PO/subunit OSCP. ATP synthase complex consists of a soluble F(1) head domain (subunits alpha(3) and beta(3)) - the catalytic core - and a membrane F(0) domain - the membrane proton channel (subunits c, a, 8, e, f, g, k and j). These two domains are linked by a central stalk (subunits gamma, delta, and epsilon) rotating inside the F1 region and a stationary peripheral stalk (subunits F6, b, d, and OSCP).

It is found in the mitochondrion. The protein resides in the mitochondrion inner membrane. In terms of biological role, subunit g, of the mitochondrial membrane ATP synthase complex (F(1)F(0) ATP synthase or Complex V) that produces ATP from ADP in the presence of a proton gradient across the membrane which is generated by electron transport complexes of the respiratory chain. ATP synthase complex consist of a soluble F(1) head domain - the catalytic core - and a membrane F(1) domain - the membrane proton channel. These two domains are linked by a central stalk rotating inside the F(1) region and a stationary peripheral stalk. During catalysis, ATP synthesis in the catalytic domain of F(1) is coupled via a rotary mechanism of the central stalk subunits to proton translocation. In vivo, can only synthesize ATP although its ATP hydrolase activity can be activated artificially in vitro. Part of the complex F(0) domain. The protein is ATP synthase F(0) complex subunit g, mitochondrial of Rattus norvegicus (Rat).